Reading from the N-terminus, the 430-residue chain is 3-phosphoshikimate 1-carboxyvinyltransferase (430 aa).

Positions 21, 22, and 26 each coordinate 3-phosphoshikimate. Lysine 21 contacts phosphoenolpyruvate. 2 residues coordinate phosphoenolpyruvate: glycine 94 and arginine 122. 3-phosphoshikimate contacts are provided by serine 167, glutamine 169, aspartate 317, and lysine 344. Residue glutamine 169 participates in phosphoenolpyruvate binding. Aspartate 317 acts as the Proton acceptor in catalysis. Positions 348 and 390 each coordinate phosphoenolpyruvate.

The protein belongs to the EPSP synthase family. In terms of assembly, monomer.

Its subcellular location is the cytoplasm. It carries out the reaction 3-phosphoshikimate + phosphoenolpyruvate = 5-O-(1-carboxyvinyl)-3-phosphoshikimate + phosphate. Its pathway is metabolic intermediate biosynthesis; chorismate biosynthesis; chorismate from D-erythrose 4-phosphate and phosphoenolpyruvate: step 6/7. In terms of biological role, catalyzes the transfer of the enolpyruvyl moiety of phosphoenolpyruvate (PEP) to the 5-hydroxyl of shikimate-3-phosphate (S3P) to produce enolpyruvyl shikimate-3-phosphate and inorganic phosphate. This Thermodesulfovibrio yellowstonii (strain ATCC 51303 / DSM 11347 / YP87) protein is 3-phosphoshikimate 1-carboxyvinyltransferase.